The following is a 270-amino-acid chain: 3-methyl-2-oxobutanoate hydroxymethyltransferase (270 aa).

Mg(2+) contacts are provided by aspartate 43 and aspartate 82. Residues 43–44 (DS), aspartate 82, and lysine 112 contribute to the 3-methyl-2-oxobutanoate site. Glutamate 114 provides a ligand contact to Mg(2+). Catalysis depends on glutamate 179, which acts as the Proton acceptor.

The protein belongs to the PanB family. In terms of assembly, homodecamer; pentamer of dimers. Mg(2+) serves as cofactor.

It localises to the cytoplasm. The enzyme catalyses 3-methyl-2-oxobutanoate + (6R)-5,10-methylene-5,6,7,8-tetrahydrofolate + H2O = 2-dehydropantoate + (6S)-5,6,7,8-tetrahydrofolate. Its pathway is cofactor biosynthesis; (R)-pantothenate biosynthesis; (R)-pantoate from 3-methyl-2-oxobutanoate: step 1/2. Its function is as follows. Catalyzes the reversible reaction in which hydroxymethyl group from 5,10-methylenetetrahydrofolate is transferred onto alpha-ketoisovalerate to form ketopantoate. The polypeptide is 3-methyl-2-oxobutanoate hydroxymethyltransferase (Staphylococcus saprophyticus subsp. saprophyticus (strain ATCC 15305 / DSM 20229 / NCIMB 8711 / NCTC 7292 / S-41)).